Reading from the N-terminus, the 399-residue chain is Putative 8-amino-7-oxononanoate synthase (399 aa).

Arg-24 contacts substrate. 111–112 (GW) contacts pyridoxal 5'-phosphate. His-141 lines the substrate pocket. Residues Ser-189, 214–217 (DEAH), and 243–246 (TFSK) each bind pyridoxal 5'-phosphate. Lys-246 carries the post-translational modification N6-(pyridoxal phosphate)lysine. Residue Thr-360 coordinates substrate.

It belongs to the class-II pyridoxal-phosphate-dependent aminotransferase family. BioF subfamily. In terms of assembly, homodimer. The cofactor is pyridoxal 5'-phosphate.

The catalysed reaction is 6-carboxyhexanoyl-[ACP] + L-alanine + H(+) = (8S)-8-amino-7-oxononanoate + holo-[ACP] + CO2. Its pathway is cofactor biosynthesis; biotin biosynthesis. Functionally, catalyzes the decarboxylative condensation of pimeloyl-[acyl-carrier protein] and L-alanine to produce 8-amino-7-oxononanoate (AON), [acyl-carrier protein], and carbon dioxide. This Bordetella bronchiseptica (strain ATCC BAA-588 / NCTC 13252 / RB50) (Alcaligenes bronchisepticus) protein is Putative 8-amino-7-oxononanoate synthase (bioF).